Here is a 316-residue protein sequence, read N- to C-terminus: Thiamine-monophosphate kinase (316 aa).

Residues Asp26, Thr49, and Asp50 each coordinate Mg(2+). Asp57 is a binding site for substrate. Asp79 provides a ligand contact to Mg(2+). Residues Tyr109, 126 to 127, and Arg151 contribute to the ATP site; that span reads GD. Position 127 (Asp127) interacts with Mg(2+). Asp198 lines the Mg(2+) pocket. Residue Ser200 participates in ATP binding. Residue Asp201 participates in Mg(2+) binding. Positions 251 and 305 each coordinate substrate.

Belongs to the thiamine-monophosphate kinase family.

The enzyme catalyses thiamine phosphate + ATP = thiamine diphosphate + ADP. The protein operates within cofactor biosynthesis; thiamine diphosphate biosynthesis; thiamine diphosphate from thiamine phosphate: step 1/1. Its function is as follows. Catalyzes the ATP-dependent phosphorylation of thiamine-monophosphate (TMP) to form thiamine-pyrophosphate (TPP), the active form of vitamin B1. This is Thiamine-monophosphate kinase from Rhodopirellula baltica (strain DSM 10527 / NCIMB 13988 / SH1).